A 156-amino-acid polypeptide reads, in one-letter code: ATP synthase subunit b (156 aa).

Residues 7 to 29 (LLGQAIAFFFFVTFCMKYVWPPL) traverse the membrane as a helical segment.

It belongs to the ATPase B chain family. In terms of assembly, F-type ATPases have 2 components, F(1) - the catalytic core - and F(0) - the membrane proton channel. F(1) has five subunits: alpha(3), beta(3), gamma(1), delta(1), epsilon(1). F(0) has three main subunits: a(1), b(2) and c(10-14). The alpha and beta chains form an alternating ring which encloses part of the gamma chain. F(1) is attached to F(0) by a central stalk formed by the gamma and epsilon chains, while a peripheral stalk is formed by the delta and b chains.

The protein resides in the cell inner membrane. F(1)F(0) ATP synthase produces ATP from ADP in the presence of a proton or sodium gradient. F-type ATPases consist of two structural domains, F(1) containing the extramembraneous catalytic core and F(0) containing the membrane proton channel, linked together by a central stalk and a peripheral stalk. During catalysis, ATP synthesis in the catalytic domain of F(1) is coupled via a rotary mechanism of the central stalk subunits to proton translocation. In terms of biological role, component of the F(0) channel, it forms part of the peripheral stalk, linking F(1) to F(0). This is ATP synthase subunit b from Photobacterium profundum (strain SS9).